Reading from the N-terminus, the 1263-residue chain is DNA-directed RNA polymerase subunit beta (1263 aa).

Belongs to the RNA polymerase beta chain family. As to quaternary structure, the RNAP catalytic core consists of 2 alpha, 1 beta, 1 beta' and 1 omega subunit. When a sigma factor is associated with the core the holoenzyme is formed, which can initiate transcription.

It catalyses the reaction RNA(n) + a ribonucleoside 5'-triphosphate = RNA(n+1) + diphosphate. DNA-dependent RNA polymerase catalyzes the transcription of DNA into RNA using the four ribonucleoside triphosphates as substrates. This is DNA-directed RNA polymerase subunit beta from Thermotoga maritima (strain ATCC 43589 / DSM 3109 / JCM 10099 / NBRC 100826 / MSB8).